Consider the following 377-residue polypeptide: Actin depolymerising venom protein gelsolin 1 (377 aa).

The N-terminal stretch at 1-26 (MFRQMKLGSLATKLLLACFLVTCTSG) is a signal peptide. 3 Gelsolin-like repeats span residues 50 to 133 (FVPV…SEQF), 174 to 243 (IRVR…SSTS), and 298 to 368 (EKPL…PTAF).

Expressed by the venom gland (posterior main gland) (at protein level).

It localises to the secreted. This chain is Actin depolymerising venom protein gelsolin 1, found in Platymeris rhadamanthus (Red spot assassin bug).